The primary structure comprises 156 residues: Transcription elongation factor GreA (156 aa).

Positions 1-32 (MKKVRLTREGYEKLKQELEELKRKFMYEISER) form a coiled coil.

Belongs to the GreA/GreB family.

Necessary for efficient RNA polymerase transcription elongation past template-encoded arresting sites. The arresting sites in DNA have the property of trapping a certain fraction of elongating RNA polymerases that pass through, resulting in locked ternary complexes. Cleavage of the nascent transcript by cleavage factors such as GreA or GreB allows the resumption of elongation from the new 3'terminus. GreA releases sequences of 2 to 3 nucleotides. The sequence is that of Transcription elongation factor GreA from Thermotoga neapolitana (strain ATCC 49049 / DSM 4359 / NBRC 107923 / NS-E).